The chain runs to 316 residues: 4-diphosphocytidyl-2-C-methyl-D-erythritol kinase (316 aa).

Lys-23 is an active-site residue. ATP is bound at residue 108–118; it reads PVAGGMAGGSA. Residue Asp-150 is part of the active site.

Belongs to the GHMP kinase family. IspE subfamily.

The catalysed reaction is 4-CDP-2-C-methyl-D-erythritol + ATP = 4-CDP-2-C-methyl-D-erythritol 2-phosphate + ADP + H(+). The protein operates within isoprenoid biosynthesis; isopentenyl diphosphate biosynthesis via DXP pathway; isopentenyl diphosphate from 1-deoxy-D-xylulose 5-phosphate: step 3/6. Catalyzes the phosphorylation of the position 2 hydroxy group of 4-diphosphocytidyl-2C-methyl-D-erythritol. This Mycobacterium avium (strain 104) protein is 4-diphosphocytidyl-2-C-methyl-D-erythritol kinase.